Here is a 1015-residue protein sequence, read N- to C-terminus: DNA ligase 3 (1015 aa).

The PARP-type zinc finger occupies 94–186 (FCVDYAKRGT…QISQHIADLS (93 aa)). Residues Cys106, Cys109, His140, and Cys143 each contribute to the Zn(2+) site. 4 positions are modified to phosphoserine: Ser211, Ser217, Ser228, and Ser244. Positions 229–255 (GFSAAKPNNSEQAPSSPAPGTSLSASK) are disordered. A compositionally biased stretch (polar residues) spans 234-253 (KPNNSEQAPSSPAPGTSLSA). Interaction with DNA regions lie at residues 279 to 282 (PSYN), 323 to 328 (VYNLND), 393 to 396 (TKED), and 426 to 432 (KMNSGAK). Glu511 serves as a coordination point for ATP. Catalysis depends on Lys513, which acts as the N6-AMP-lysine intermediate. Positions 518 and 533 each coordinate ATP. Mg(2+)-binding residues include Glu565 and Glu660. Residues Lys665, Arg676, and Lys680 each contribute to the ATP site. The interval 849-926 (DEASPTTGGS…KSSPVKVGMK (78 aa)) is disordered. Over residues 854–884 (TTGGSSGENEGTAGSAGPCKGPPSKSSASAK) the composition is skewed to low complexity. Ser919 bears the Phosphoserine mark. The region spanning 939–1015 (VLLDVFTGVR…IRKRRLIAPC (77 aa)) is the BRCT domain.

The protein belongs to the ATP-dependent DNA ligase family. Isoform 3 interacts (via BRCT domain) with the nuclear DNA-repair protein XRCC1. Interacts with POLG. Interacts with POLB. Requires Mg(2+) as cofactor. As to expression, the alpha isoform is expressed in all tissues, while the beta isoform is expressed only in the testis.

The protein localises to the nucleus. It carries out the reaction ATP + (deoxyribonucleotide)n-3'-hydroxyl + 5'-phospho-(deoxyribonucleotide)m = (deoxyribonucleotide)n+m + AMP + diphosphate.. The alpha isoform interacts with DNA-repair protein XRCC1 and can correct defective DNA strand-break repair and sister chromatid exchange following treatment with ionizing radiation and alkylating agents. The beta isoform does not interact with XRCC1 and may be specifically involved in the completion of homologous recombination events that occur during meiotic prophase. This Mus musculus (Mouse) protein is DNA ligase 3 (Lig3).